Here is a 165-residue protein sequence, read N- to C-terminus: Chorismate pyruvate-lyase (165 aa).

4 residues coordinate substrate: M35, R77, L115, and E156.

This sequence belongs to the UbiC family. As to quaternary structure, monomer.

Its subcellular location is the cytoplasm. The enzyme catalyses chorismate = 4-hydroxybenzoate + pyruvate. Its pathway is cofactor biosynthesis; ubiquinone biosynthesis. Its function is as follows. Removes the pyruvyl group from chorismate, with concomitant aromatization of the ring, to provide 4-hydroxybenzoate (4HB) for the ubiquinone pathway. This is Chorismate pyruvate-lyase from Escherichia coli O127:H6 (strain E2348/69 / EPEC).